We begin with the raw amino-acid sequence, 211 residues long: Adenylate kinase (211 aa).

ATP is bound at residue 13-18 (GAGKGT). The NMP stretch occupies residues 33–62 (STGDILRVAVANKTKLGLEAKKFMDAGQLV). AMP contacts are provided by residues Thr-34, Arg-39, 60–62 (QLV), 88–91 (GFPR), and Gln-95. The tract at residues 129–161 (GRRTSKVTGKIYHIKFNPPVDEKPEDLVQRADD) is LID. ATP contacts are provided by residues Arg-130 and 139–140 (IY). 2 residues coordinate AMP: Arg-158 and Arg-169. Lys-197 provides a ligand contact to ATP.

This sequence belongs to the adenylate kinase family. In terms of assembly, monomer.

It localises to the cytoplasm. The enzyme catalyses AMP + ATP = 2 ADP. The protein operates within purine metabolism; AMP biosynthesis via salvage pathway; AMP from ADP: step 1/1. Functionally, catalyzes the reversible transfer of the terminal phosphate group between ATP and AMP. Plays an important role in cellular energy homeostasis and in adenine nucleotide metabolism. This is Adenylate kinase from Fusobacterium nucleatum subsp. nucleatum (strain ATCC 25586 / DSM 15643 / BCRC 10681 / CIP 101130 / JCM 8532 / KCTC 2640 / LMG 13131 / VPI 4355).